Here is a 362-residue protein sequence, read N- to C-terminus: GDSL esterase/lipase At5g18430 (362 aa).

The N-terminal stretch at 1–19 (MTISTVIAFMSMFLVFVMS) is a signal peptide. The active-site Nucleophile is Ser35. A glycan (N-linked (GlcNAc...) asparagine) is linked at Asn117. Catalysis depends on residues Asp327 and His330. Residue Asn355 is glycosylated (N-linked (GlcNAc...) asparagine).

The protein belongs to the 'GDSL' lipolytic enzyme family.

Its subcellular location is the secreted. The protein is GDSL esterase/lipase At5g18430 of Arabidopsis thaliana (Mouse-ear cress).